The following is a 103-amino-acid chain: Large ribosomal subunit protein bL21 (103 aa).

The protein belongs to the bacterial ribosomal protein bL21 family. As to quaternary structure, part of the 50S ribosomal subunit. Contacts protein L20.

In terms of biological role, this protein binds to 23S rRNA in the presence of protein L20. This is Large ribosomal subunit protein bL21 from Methylibium petroleiphilum (strain ATCC BAA-1232 / LMG 22953 / PM1).